A 286-amino-acid polypeptide reads, in one-letter code: Small ribosomal subunit protein uS15m (286 aa).

A mitochondrion-targeting transit peptide spans 1 to 33 (MSIVGRNAILNLRISLCPLFMGKRSFVSSPVSN).

It belongs to the universal ribosomal protein uS15 family. As to quaternary structure, component of the mitochondrial small ribosomal subunit (mt-SSU). Mature yeast 74S mitochondrial ribosomes consist of a small (37S) and a large (54S) subunit. The 37S small subunit contains a 15S ribosomal RNA (15S mt-rRNA) and 34 different proteins. The 54S large subunit contains a 21S rRNA (21S mt-rRNA) and 46 different proteins. The precursor is processed in two steps involving mitochondrial intermediate peptidase (MIP) and mitochondrial processing peptidase (MPP).

The protein resides in the mitochondrion. In terms of biological role, component of the mitochondrial ribosome (mitoribosome), a dedicated translation machinery responsible for the synthesis of mitochondrial genome-encoded proteins, including at least some of the essential transmembrane subunits of the mitochondrial respiratory chain. The mitoribosomes are attached to the mitochondrial inner membrane and translation products are cotranslationally integrated into the membrane. This is Small ribosomal subunit protein uS15m (MRPS28) from Saccharomyces cerevisiae (strain ATCC 204508 / S288c) (Baker's yeast).